Reading from the N-terminus, the 98-residue chain is Guanine nucleotide-binding protein subunit gamma 1 (98 aa).

A G protein gamma domain is found at 19–98 (GKHRILAELA…GGEGCRCLIL (80 aa)). The stretch at 20-50 (KHRILAELARVEQEVAFLEKELKEVENTDIV) forms a coiled coil. The regulates lipidation and cell membrane subcellular localization stretch occupies residues 88 to 94 (NGGEGCR). A lipid anchor (S-palmitoyl cysteine) is attached at Cys-93. Cys-95 bears the Cysteine methyl ester mark. Cys-95 carries S-farnesyl cysteine lipidation. The propeptide at 96–98 (LIL) is removed in mature form.

G proteins are composed of 3 units, alpha, beta and gamma. Interacts with the beta subunit GB1. The dimer GB1-GG1 interacts with NDL1, NDL2 and NDL3. Binds to NUDT7. In terms of tissue distribution, mostly expressed in seedlings (especially at the hypocotyl/root junction), young cauline leaves, open flowers, and floral stems, and, to a lower extent, in roots (restricted to the stele), rosette leaves (restricted to veins), siliques, and unopened floral buds. Also present in hydathods.

It is found in the cell membrane. It localises to the golgi apparatus membrane. The protein localises to the golgi apparatus. Its subcellular location is the trans-Golgi network membrane. The protein resides in the cytoplasm. In terms of biological role, guanine nucleotide-binding proteins (G proteins) are involved as a modulator or transducer in various transmembrane signaling systems. The beta and gamma chains are required for the GTPase activity, for replacement of GDP by GTP, and for G protein-effector interaction. Involved in the abscisic acid (ABA) and ethylene signaling pathways. Regulates acropetal transport of auxin (IAA) in roots and hypocotyls, and thus modulates root architecture (e.g. lateral root formation). The heterotrimeric G-protein controls defense responses to necrotrophic and vascular fungi probably by modulating cell wall-related genes expression; involved in resistance to fungal pathogens such as Alternaria brassicicola, Plectosphaerella cucumerina and Fusarium oxysporum. This is Guanine nucleotide-binding protein subunit gamma 1 (GG1) from Arabidopsis thaliana (Mouse-ear cress).